Here is a 248-residue protein sequence, read N- to C-terminus: Putative amino-acid ABC transporter-binding protein PatH (248 aa).

The first 21 residues, 1-21 (MKNWIKVAVAAIALSAATVQA), serve as a signal peptide directing secretion.

The protein belongs to the bacterial solute-binding protein 3 family.

It is found in the periplasm. Probably part of a binding-protein-dependent transport system for an amino acid. This Vibrio harveyi (Beneckea harveyi) protein is Putative amino-acid ABC transporter-binding protein PatH (patH).